The chain runs to 214 residues: Putative glucose-6-phosphate isomerase 1 (214 aa).

Fe cation-binding residues include His92, His94, Glu101, and His140.

It belongs to the archaeal-type GPI family. As to quaternary structure, homodimer. It depends on Fe cation as a cofactor.

The protein resides in the cytoplasm. It carries out the reaction alpha-D-glucose 6-phosphate = beta-D-fructose 6-phosphate. It participates in carbohydrate degradation; glycolysis; D-glyceraldehyde 3-phosphate and glycerone phosphate from D-glucose: step 2/4. The sequence is that of Putative glucose-6-phosphate isomerase 1 (pgiA1) from Rhizobium meliloti (strain 1021) (Ensifer meliloti).